Consider the following 357-residue polypeptide: Anthranilate phosphoribosyltransferase (357 aa).

5-phospho-alpha-D-ribose 1-diphosphate contacts are provided by residues glycine 91, glycine 94–aspartate 95, threonine 99, asparagine 101–threonine 104, lysine 119–serine 127, and serine 131. Glycine 91 contributes to the anthranilate binding site. Serine 103 is a Mg(2+) binding site. Residue asparagine 122 participates in anthranilate binding. Arginine 177 lines the anthranilate pocket. Residues aspartate 235 and glutamate 236 each coordinate Mg(2+).

The protein belongs to the anthranilate phosphoribosyltransferase family. In terms of assembly, homodimer. Requires Mg(2+) as cofactor.

The enzyme catalyses N-(5-phospho-beta-D-ribosyl)anthranilate + diphosphate = 5-phospho-alpha-D-ribose 1-diphosphate + anthranilate. The protein operates within amino-acid biosynthesis; L-tryptophan biosynthesis; L-tryptophan from chorismate: step 2/5. Catalyzes the transfer of the phosphoribosyl group of 5-phosphorylribose-1-pyrophosphate (PRPP) to anthranilate to yield N-(5'-phosphoribosyl)-anthranilate (PRA). The chain is Anthranilate phosphoribosyltransferase from Shewanella baltica (strain OS185).